Reading from the N-terminus, the 238-residue chain is MKTEELYSGKAKTIYKTENPNELISEFRDSLTAFDGKKKSEATNKGYYNAQISKKIFEMLEEEGIKTHYLGMVSGNEMLVKKVDIILIEVIPRNIAAGSITRKYPVEEGTVFKEPVLVFDYKSDEFGDPMINDDIAVVMGIATREEIDFIRSMALKINAILKSYLESNGFLLPDFKLEFGRVDGEIVLADEISCDTCRFWDVETGESMDKDLFRFDKGDLSKAYEKVARRLVPEIFEE.

This sequence belongs to the SAICAR synthetase family.

It carries out the reaction 5-amino-1-(5-phospho-D-ribosyl)imidazole-4-carboxylate + L-aspartate + ATP = (2S)-2-[5-amino-1-(5-phospho-beta-D-ribosyl)imidazole-4-carboxamido]succinate + ADP + phosphate + 2 H(+). It functions in the pathway purine metabolism; IMP biosynthesis via de novo pathway; 5-amino-1-(5-phospho-D-ribosyl)imidazole-4-carboxamide from 5-amino-1-(5-phospho-D-ribosyl)imidazole-4-carboxylate: step 1/2. This Methanococcoides burtonii (strain DSM 6242 / NBRC 107633 / OCM 468 / ACE-M) protein is Phosphoribosylaminoimidazole-succinocarboxamide synthase.